We begin with the raw amino-acid sequence, 123 residues long: WAP four-disulfide core domain protein 5 (123 aa).

Positions 1-24 (MRIQSLLLLGALLAVGSQLPAVFG) are cleaved as a signal peptide. 2 consecutive WAP domains span residues 27-73 (KGEK…CVPR) and 74-121 (VSVK…RDPA). Cystine bridges form between Cys-34–Cys-62, Cys-41–Cys-66, Cys-49–Cys-61, Cys-55–Cys-70, Cys-81–Cys-109, Cys-88–Cys-113, Cys-96–Cys-108, and Cys-102–Cys-117.

Its subcellular location is the secreted. Functionally, putative acid-stable proteinase inhibitor. The polypeptide is WAP four-disulfide core domain protein 5 (WFDC5) (Chlorocebus aethiops (Green monkey)).